The following is a 725-amino-acid chain: Rab-like protein 6 (725 aa).

Methionine 1 is modified (N-acetylmethionine). A small GTPase-like region spans residues 39–279 (GVQYNMKIVI…IFLEMMEARS (241 aa)). Residues 50–57 (GDRNTGKT), 100–104 (DVVDK), and 177–179 (YRD) each bind GTP. Disordered stretches follow at residues 281–364 (GHAS…PAPA) and 378–725 (PAAE…YEEL). Low complexity-rich tracts occupy residues 291 to 325 (QSPS…QLSL) and 343 to 353 (AMPSSVHSSAP). Positions 410 to 427 (GLDRSFLEDTSVPKDKKV) are enriched in basic and acidic residues. A phosphoserine mark is found at serine 414, serine 436, serine 438, serine 480, serine 482, serine 483, and serine 502. The span at 499 to 514 (QQCSEPETKWSSTKVS) shows a compositional bias: polar residues. The span at 537 to 549 (DSERPQEGKDKQV) shows a compositional bias: basic and acidic residues. Residues 569-578 (DDPDFESDES) show a composition bias toward acidic residues. Residues serine 575 and serine 594 each carry the phosphoserine modification. The residue at position 597 (threonine 597) is a Phosphothreonine. Basic and acidic residues predominate over residues 632–649 (MGPKESSDEDRDSKLPSK). Serine 637, serine 638, and serine 644 each carry phosphoserine. Positions 652 to 690 (KKKKKKSKEEEEKTTKKKSKHKKSKDKEEGKEDRKKKRK) are interaction with CDKN2A. Residues 666-675 (TKKKSKHKKS) show a composition bias toward basic residues. The span at 707-725 (LGGGAPGSRHPGGGDYEEL) shows a compositional bias: gly residues.

Belongs to the small GTPase superfamily. Rab family.

Its subcellular location is the nucleus. The protein localises to the cytoplasm. May enhance cellular proliferation. May reduce growth inhibitory activity of CDKN2A. This chain is Rab-like protein 6 (Rabl6), found in Mus musculus (Mouse).